Consider the following 201-residue polypeptide: Regulator of G-protein signaling rgs-1 (201 aa).

The RGS domain occupies 37–156; that stretch reads SWQQSFDTLM…FLTSIFYRET (120 aa). The tract at residues 168 to 201 is disordered; that stretch reads GGDEEKEREQRAERARLNVPATAAEGSSKDISMV. The segment covering 170–183 has biased composition (basic and acidic residues); sequence DEEKEREQRAERAR.

Expressed in most or all neurons.

Functionally, inhibits G protein signaling in nervous system, interacting preferentially with the G(O) subfamily member goa-1. In vitro, protein acts as a GTPase activator of goa-1. Rgs-1 and rgs-2 redundantly adjust signaling when worms are fed to allow rapid induction of egg-laying behavior. The polypeptide is Regulator of G-protein signaling rgs-1 (rgs-1) (Caenorhabditis elegans).